We begin with the raw amino-acid sequence, 210 residues long: Large ribosomal subunit protein uL4 (210 aa).

A compositionally biased stretch (polar residues) spans 41 to 51 (QNNARQGNASA). The segment at 41 to 77 (QNNARQGNASAKTRAEVRGGGRKPWKQKGTGRARAGS) is disordered. Basic residues predominate over residues 60–71 (GGRKPWKQKGTG).

It belongs to the universal ribosomal protein uL4 family. In terms of assembly, part of the 50S ribosomal subunit.

Its function is as follows. One of the primary rRNA binding proteins, this protein initially binds near the 5'-end of the 23S rRNA. It is important during the early stages of 50S assembly. It makes multiple contacts with different domains of the 23S rRNA in the assembled 50S subunit and ribosome. Forms part of the polypeptide exit tunnel. This chain is Large ribosomal subunit protein uL4, found in Synechocystis sp. (strain ATCC 27184 / PCC 6803 / Kazusa).